We begin with the raw amino-acid sequence, 747 residues long: Elongation factor G, mitochondrial (747 aa).

A mitochondrion-targeting transit peptide spans 1–32 (MTLITRVLNGNLPLRLSTLKAARQLQCGYSSH). The tr-type G domain occupies 42-319 (ERIRNIGISA…AVVDYLPNPG (278 aa)). Residues 51 to 58 (AHIDSGKT), 118 to 122 (DTPGH), and 172 to 175 (NKLD) each bind GTP.

This sequence belongs to the TRAFAC class translation factor GTPase superfamily. Classic translation factor GTPase family. EF-G/EF-2 subfamily.

It localises to the mitochondrion. Its pathway is protein biosynthesis; polypeptide chain elongation. Functionally, mitochondrial GTPase that catalyzes the GTP-dependent ribosomal translocation step during translation elongation. During this step, the ribosome changes from the pre-translocational (PRE) to the post-translocational (POST) state as the newly formed A-site-bound peptidyl-tRNA and P-site-bound deacylated tRNA move to the P and E sites, respectively. Catalyzes the coordinated movement of the two tRNA molecules, the mRNA and conformational changes in the ribosome. Essential during development as it acts as a retrograde signal from mitochondria to the nucleus to slow down cell proliferation if mitochondrial energy output is low. In Drosophila mojavensis (Fruit fly), this protein is Elongation factor G, mitochondrial.